Consider the following 750-residue polypeptide: Glutamate carboxypeptidase 2 (750 aa).

Over 1–19 (MWNLLHETDSAVATARRPR) the chain is Cytoplasmic. A Phosphoserine modification is found at serine 10. The helical; Signal-anchor for type II membrane protein transmembrane segment at 20-43 (WLCAGALVLAGGFFLLGFLFGWFI) threads the bilayer. At 44 to 750 (KSSNEATNIT…AAAETLSEVA (707 aa)) the chain is on the extracellular side. 6 N-linked (GlcNAc...) asparagine glycosylation sites follow: asparagine 51, asparagine 76, asparagine 121, asparagine 140, asparagine 153, and asparagine 195. Residues arginine 210 and asparagine 257 each contribute to the substrate site. Threonine 269 and tyrosine 272 together coordinate Ca(2+). The segment at 274 to 587 (ANEYAYRRGI…QVRGGMVFEL (314 aa)) is NAALADase. Asparagine 336 carries N-linked (GlcNAc...) asparagine glycosylation. 2 residues coordinate Zn(2+): histidine 377 and aspartate 387. Glutamate 424 is a substrate binding site. Residue glutamate 424 is the Nucleophile; for NAALADase activity of the active site. Glutamate 425 lines the Zn(2+) pocket. Ca(2+) is bound by residues glutamate 433 and glutamate 436. A Zn(2+)-binding site is contributed by aspartate 453. Residues asparagine 459 and asparagine 476 are each glycosylated (N-linked (GlcNAc...) asparagine). Substrate is bound by residues 517–518 (SG), asparagine 519, 534–536 (RAR), tyrosine 552, and 552–553 (YH). Histidine 553 is a binding site for Zn(2+). Serine 628 functions as the Charge relay system in the catalytic mechanism. Asparagine 638 is a glycosylation site (N-linked (GlcNAc...) asparagine). Catalysis depends on charge relay system residues aspartate 666 and histidine 689. A substrate-binding site is contributed by 699–700 (KY).

This sequence belongs to the peptidase M28 family. M28B subfamily. Homodimer. Zn(2+) serves as cofactor. In terms of processing, the first two amino acids at the N-terminus of isoform PSMA' appear to be cleaved by limited proteolysis. Post-translationally, the N-terminus is blocked. In terms of tissue distribution, highly expressed in prostate epithelium. Detected in urinary bladder, kidney, testis, ovary, fallopian tube, breast, adrenal gland, liver, esophagus, stomach, small intestine, colon and brain (at protein level). Detected in the small intestine, brain, kidney, liver, spleen, colon, trachea, spinal cord and the capillary endothelium of a variety of tumors. Expressed specifically in jejunum brush border membranes. In the brain, highly expressed in the ventral striatum and brain stem. Also expressed in fetal liver and kidney. Isoform PSMA' is the most abundant form in normal prostate. Isoform PSMA-1 is the most abundant form in primary prostate tumors. Isoform PSMA-9 is specifically expressed in prostate cancer.

It is found in the cell membrane. The protein localises to the cytoplasm. It carries out the reaction Release of an unsubstituted, C-terminal glutamyl residue, typically from Ac-Asp-Glu or folylpoly-gamma-glutamates.. With respect to regulation, the NAALADase activity is inhibited by beta-NAAG, quisqualic acid, 2-(phosphonomethyl) pentanedioic acid (PMPA) and EDTA. Activated by cobalt. Functionally, has both folate hydrolase and N-acetylated-alpha-linked-acidic dipeptidase (NAALADase) activity. Has a preference for tri-alpha-glutamate peptides. In the intestine, required for the uptake of folate. In the brain, modulates excitatory neurotransmission through the hydrolysis of the neuropeptide, N-aceylaspartylglutamate (NAAG), thereby releasing glutamate. Involved in prostate tumor progression. Its function is as follows. Also exhibits a dipeptidyl-peptidase IV type activity. In vitro, cleaves Gly-Pro-AMC. The polypeptide is Glutamate carboxypeptidase 2 (Homo sapiens (Human)).